The sequence spans 419 residues: Ribosome biogenesis protein WDR12 homolog (419 aa).

Positions V10–E91 are ubiquitin-like (UBL) domain. 7 WD repeats span residues L103 to I140, G142 to E184, G191 to S230, G249 to E287, S289 to V328, G334 to Y374, and G378 to M416.

Belongs to the WD repeat WDR12/YTM1 family.

Its subcellular location is the nucleus. The protein resides in the nucleolus. It localises to the nucleoplasm. Required for maturation of ribosomal RNAs and formation of the large ribosomal subunit. The sequence is that of Ribosome biogenesis protein WDR12 homolog from Drosophila mojavensis (Fruit fly).